The primary structure comprises 207 residues: uncharacterized protein (207 aa).

Disordered stretches follow at residues 1–81 (MNPT…GNTR) and 140–169 (TSQS…PPKK). Over residues 21–40 (FEQTNSSASLTQKNSSSETE) the composition is skewed to polar residues. Positions 58 to 70 (PTKRGSGRGRGRS) are enriched in basic residues. Residues 140-152 (TSQSIDAQPTPSQ) show a composition bias toward polar residues. Over residues 156–165 (AHHEPHEKRG) the composition is skewed to basic and acidic residues.

The protein resides in the nucleus. The protein localises to the nucleolus. This is an uncharacterized protein from Schizosaccharomyces pombe (strain 972 / ATCC 24843) (Fission yeast).